The following is a 115-amino-acid chain: MVRVKRGNVARKRRKKILKLASGFKGAHSKLFRVANQQVNKSLRYSYVGRKLKKRRFRRLWILRLNAASREEGLNYSKLVNSLKLLRIQLNRKSLSQLAMIDNDAFKRLVASSRV.

Belongs to the bacterial ribosomal protein bL20 family.

Its subcellular location is the plastid. The protein localises to the chloroplast. Binds directly to 23S ribosomal RNA and is necessary for the in vitro assembly process of the 50S ribosomal subunit. It is not involved in the protein synthesizing functions of that subunit. This chain is Large ribosomal subunit protein bL20c (rpl20), found in Cyanidium caldarium (Red alga).